Reading from the N-terminus, the 435-residue chain is Serine hydroxymethyltransferase 2 (435 aa).

(6S)-5,6,7,8-tetrahydrofolate-binding positions include L135 and 139 to 141 (GHL). K244 carries the N6-(pyridoxal phosphate)lysine modification. E260 lines the (6S)-5,6,7,8-tetrahydrofolate pocket.

The protein belongs to the SHMT family. In terms of assembly, homodimer. The cofactor is pyridoxal 5'-phosphate.

Its subcellular location is the cytoplasm. It catalyses the reaction (6R)-5,10-methylene-5,6,7,8-tetrahydrofolate + glycine + H2O = (6S)-5,6,7,8-tetrahydrofolate + L-serine. The protein operates within one-carbon metabolism; tetrahydrofolate interconversion. Its pathway is amino-acid biosynthesis; glycine biosynthesis; glycine from L-serine: step 1/1. Catalyzes the reversible interconversion of serine and glycine with tetrahydrofolate (THF) serving as the one-carbon carrier. This reaction serves as the major source of one-carbon groups required for the biosynthesis of purines, thymidylate, methionine, and other important biomolecules. Also exhibits THF-independent aldolase activity toward beta-hydroxyamino acids, producing glycine and aldehydes, via a retro-aldol mechanism. In Vibrio cholerae serotype O1 (strain ATCC 39315 / El Tor Inaba N16961), this protein is Serine hydroxymethyltransferase 2.